A 371-amino-acid chain; its full sequence is MSIFQLLARDGAARRGTIRLPRGTVQTPAFMPVGTYGTVKAMSPEELKTLGAEIILGNTFHLFLRPGLEVISAVGGLHRMMHWDRPILTDSGGFQVFSLGALRKLTEAGVQFRAPTDGHMVFLGPEESMQIQAALGSDIAMVFDECTPHPASYEEARVSMELSLRWAARSHAAYAGPGELFGIVQGGMYADLRRRSLAGLQRLDFPGLAIGGLSVGESKVEMMQVLDDLMPHMPADRPRYLMGVGTPEDLVEGVRRGVDMFDCVMPTRNARNGWLFTRDGVLKLRNARYEKDVLPPDPACACYTCQNYSRAYLRHLQRSHEILGARLNTLHNLHYYQELMAGLREAIAAGRLDAYADDFYRRRRAGSLVGA.

The Proton acceptor role is filled by Asp-90. Substrate contacts are provided by residues 90-94 (DSGGF), Asp-144, Gln-185, and Gly-212. The segment at 243–249 (GVGTPED) is RNA binding. The active-site Nucleophile is Asp-262. The RNA binding; important for wobble base 34 recognition stretch occupies residues 267–271 (TRNAR). 4 residues coordinate Zn(2+): Cys-300, Cys-302, Cys-305, and His-331.

Belongs to the queuine tRNA-ribosyltransferase family. As to quaternary structure, homodimer. Within each dimer, one monomer is responsible for RNA recognition and catalysis, while the other monomer binds to the replacement base PreQ1. Zn(2+) serves as cofactor.

The catalysed reaction is 7-aminomethyl-7-carbaguanine + guanosine(34) in tRNA = 7-aminomethyl-7-carbaguanosine(34) in tRNA + guanine. It participates in tRNA modification; tRNA-queuosine biosynthesis. In terms of biological role, catalyzes the base-exchange of a guanine (G) residue with the queuine precursor 7-aminomethyl-7-deazaguanine (PreQ1) at position 34 (anticodon wobble position) in tRNAs with GU(N) anticodons (tRNA-Asp, -Asn, -His and -Tyr). Catalysis occurs through a double-displacement mechanism. The nucleophile active site attacks the C1' of nucleotide 34 to detach the guanine base from the RNA, forming a covalent enzyme-RNA intermediate. The proton acceptor active site deprotonates the incoming PreQ1, allowing a nucleophilic attack on the C1' of the ribose to form the product. After dissociation, two additional enzymatic reactions on the tRNA convert PreQ1 to queuine (Q), resulting in the hypermodified nucleoside queuosine (7-(((4,5-cis-dihydroxy-2-cyclopenten-1-yl)amino)methyl)-7-deazaguanosine). In Acidithiobacillus ferrooxidans (strain ATCC 23270 / DSM 14882 / CIP 104768 / NCIMB 8455) (Ferrobacillus ferrooxidans (strain ATCC 23270)), this protein is Queuine tRNA-ribosyltransferase.